We begin with the raw amino-acid sequence, 262 residues long: MFSEYKSTKKAGPKPAQKVEQVYEYAVWWLNQRGYSVSKLKEKLTRKTDNPEWIASVIEKLLDQGYLSDQRFAETFVQSRCRLYGPKVLTQKLKLQGVGTTDIEHALCTINDSDTDELISRVIAKYSGKKSIRDITMRLKSEGIDDTRIQSVLSSNIDTEHESQLATRIINKHAKKMGRSGLLQKLRSEGISQDTIDELFSEESKDDVIEDDQHKALEQLNKKYKTSLTDFAEKKKATAFLVRKGFSFSEANYAIEHHLEDL.

It belongs to the RecX family.

It localises to the cytoplasm. Its function is as follows. Modulates RecA activity. This Photobacterium profundum (strain SS9) protein is Regulatory protein RecX.